An 868-amino-acid polypeptide reads, in one-letter code: Leucine--tRNA ligase (868 aa).

A 'HIGH' region motif is present at residues 42–52 (PYPSGKLHMGH). The 'KMSKS' region motif lies at 627–631 (KMSKS). Lys630 provides a ligand contact to ATP.

This sequence belongs to the class-I aminoacyl-tRNA synthetase family.

It localises to the cytoplasm. The catalysed reaction is tRNA(Leu) + L-leucine + ATP = L-leucyl-tRNA(Leu) + AMP + diphosphate. The protein is Leucine--tRNA ligase of Pseudomonas syringae pv. tomato (strain ATCC BAA-871 / DC3000).